The primary structure comprises 519 residues: Serine/threonine-protein kinase RIO3 (519 aa).

Residues S8, S112, S125, S127, and S128 each carry the phosphoserine modification. The interval 122–159 is disordered; that stretch reads FEDSDSSEDEVDWQDTRDDPYRPAKPIPTPKKGFIGKG. The segment covering 124–134 has biased composition (acidic residues); sequence DSDSSEDEVDW. Residues 251–519 form the Protein kinase domain; that stretch reads ETITGCISTG…DGSPPVLSAD (269 aa). ATP is bound by residues 257–265 and K290; that span reads ISTGKESVV. Residue D406 is the Proton acceptor of the active site. Residue S512 is modified to Phosphoserine.

The protein belongs to the protein kinase superfamily. RIO-type Ser/Thr kinase family. In terms of assembly, interacts with CASP10. Interacts with IRF3; RIOK3 probably mediates the interaction of TBK1 with IRF3. Associated with 40S pre-ribosomal particles. It depends on Mg(2+) as a cofactor. In terms of processing, autophosphorylated (in vitro).

The protein localises to the cytoplasm. It catalyses the reaction L-seryl-[protein] + ATP = O-phospho-L-seryl-[protein] + ADP + H(+). The enzyme catalyses L-threonyl-[protein] + ATP = O-phospho-L-threonyl-[protein] + ADP + H(+). Involved in regulation of type I interferon (IFN)-dependent immune response which plays a critical role in the innate immune response against DNA and RNA viruses. May act as an adapter protein essential for the recruitment of TBK1 to IRF3. Phosphorylates IFIH1 on 'Ser-828' interfering with IFIH1 filament assembly on long dsRNA and resulting in attenuated IFIH1-signaling. Can inhibit CASP10 isoform 7-mediated activation of the NF-kappaB signaling pathway. May play a role in the biogenesis of the 40S ribosomal subunit. Involved in the processing of 21S pre-rRNA to the mature 18S rRNA. This Mus musculus (Mouse) protein is Serine/threonine-protein kinase RIO3 (Riok3).